Here is a 453-residue protein sequence, read N- to C-terminus: Major fimbrium subunit FimC (453 aa).

Positions M1–A28 are cleaved as a signal peptide. C29 is lipidated: N-palmitoyl cysteine. C29 is lipidated: S-diacylglycerol cysteine. Positions C29–R56 are excised as a propeptide.

It belongs to the bacteroidetes fimbrillin superfamily. FimA/Mfa1 family. In terms of assembly, fimbriae are composed of a major, structural subunit and the minor components FimC, FimD and FimE. Identified in a complex composed of FimC, FimD and FimE (in vitro). The complex interacts with host extracellular matrix proteins, including fibronectin and type I collagen. Interacts with host CXCR4.

Its subcellular location is the fimbrium. It is found in the cell outer membrane. Minor component of fimbriae. These long, filamentous pili are attached to the cell surface; they mediate biofilm formation, adhesion onto host cells and onto other bacteria that are part of the oral microbiome. They play an important role in invasion of periodontal tissues and are major virulence factors. FimC, FimD and FimE contribute to interaction with host CXCR4 and thereby down-regulate the TLR2-mediated host immune response. The protein is Major fimbrium subunit FimC of Porphyromonas gingivalis (strain ATCC 33277 / DSM 20709 / CIP 103683 / JCM 12257 / NCTC 11834 / 2561).